The sequence spans 231 residues: Large ribosomal subunit protein uL1 (231 aa).

Belongs to the universal ribosomal protein uL1 family. Part of the 50S ribosomal subunit.

In terms of biological role, binds directly to 23S rRNA. The L1 stalk is quite mobile in the ribosome, and is involved in E site tRNA release. Its function is as follows. Protein L1 is also a translational repressor protein, it controls the translation of the L11 operon by binding to its mRNA. This Gluconacetobacter diazotrophicus (strain ATCC 49037 / DSM 5601 / CCUG 37298 / CIP 103539 / LMG 7603 / PAl5) protein is Large ribosomal subunit protein uL1.